The sequence spans 286 residues: Shikimate dehydrogenase (NADP(+)) (286 aa).

Shikimate-binding positions include 22-24 and Thr71; that span reads SRS. Residue Lys75 is the Proton acceptor of the active site. Glu87 contributes to the NADP(+) binding site. 2 residues coordinate shikimate: Asn96 and Asp111. NADP(+)-binding positions include 136–140, 160–165, and Ile225; these read GAGGA and NRTVER. Tyr227 contacts shikimate. Residue Gly248 participates in NADP(+) binding.

Belongs to the shikimate dehydrogenase family. In terms of assembly, homodimer.

The enzyme catalyses shikimate + NADP(+) = 3-dehydroshikimate + NADPH + H(+). Its pathway is metabolic intermediate biosynthesis; chorismate biosynthesis; chorismate from D-erythrose 4-phosphate and phosphoenolpyruvate: step 4/7. Its function is as follows. Involved in the biosynthesis of the chorismate, which leads to the biosynthesis of aromatic amino acids. Catalyzes the reversible NADPH linked reduction of 3-dehydroshikimate (DHSA) to yield shikimate (SA). The chain is Shikimate dehydrogenase (NADP(+)) from Rhizobium rhizogenes (strain K84 / ATCC BAA-868) (Agrobacterium radiobacter).